The primary structure comprises 452 residues: Pup--protein ligase (452 aa).

Glu9 serves as a coordination point for Mg(2+). Residue Arg53 coordinates ATP. Residue Tyr55 participates in Mg(2+) binding. The active-site Proton acceptor is Asp57. Residue Glu63 coordinates Mg(2+). Residues Thr66 and Trp419 each contribute to the ATP site.

This sequence belongs to the Pup ligase/Pup deamidase family. Pup-conjugating enzyme subfamily. Post-translationally, pupylated at an undetermined lysine residue by the prokaryotic ubiquitin-like protein Pup, which leads to its degradation by the proteasome and thereby constitutes a negative auto-regulation.

The enzyme catalyses ATP + [prokaryotic ubiquitin-like protein]-L-glutamate + [protein]-L-lysine = ADP + phosphate + N(6)-([prokaryotic ubiquitin-like protein]-gamma-L-glutamyl)-[protein]-L-lysine.. The protein operates within protein degradation; proteasomal Pup-dependent pathway. Its pathway is protein modification; protein pupylation. Catalyzes the covalent attachment of the prokaryotic ubiquitin-like protein modifier Pup to the proteasomal substrate proteins, thereby targeting them for proteasomal degradation. This tagging system is termed pupylation. The ligation reaction likely involves the side-chain carboxylate of the C-terminal glutamate of Pup and the side-chain amino group of a substrate lysine. This chain is Pup--protein ligase (pafA), found in Mycolicibacterium smegmatis (strain ATCC 700084 / mc(2)155) (Mycobacterium smegmatis).